The following is a 346-amino-acid chain: tRNA N6-adenosine threonylcarbamoyltransferase (346 aa).

Positions 111 and 115 each coordinate Fe cation. Residues 134-138 (LVSGG), Asp-167, Gly-180, and Asn-279 contribute to the substrate site. Residue Asp-307 coordinates Fe cation.

It belongs to the KAE1 / TsaD family. Requires Fe(2+) as cofactor.

The protein resides in the cytoplasm. It catalyses the reaction L-threonylcarbamoyladenylate + adenosine(37) in tRNA = N(6)-L-threonylcarbamoyladenosine(37) in tRNA + AMP + H(+). Its function is as follows. Required for the formation of a threonylcarbamoyl group on adenosine at position 37 (t(6)A37) in tRNAs that read codons beginning with adenine. Is involved in the transfer of the threonylcarbamoyl moiety of threonylcarbamoyl-AMP (TC-AMP) to the N6 group of A37, together with TsaE and TsaB. TsaD likely plays a direct catalytic role in this reaction. The chain is tRNA N6-adenosine threonylcarbamoyltransferase from Burkholderia pseudomallei (strain 1106a).